Consider the following 148-residue polypeptide: Large ribosomal subunit protein bL9 (148 aa).

Belongs to the bacterial ribosomal protein bL9 family.

Functionally, binds to the 23S rRNA. The chain is Large ribosomal subunit protein bL9 from Macrococcus caseolyticus (strain JCSC5402) (Macrococcoides caseolyticum).